Here is a 170-residue protein sequence, read N- to C-terminus: Guided entry of tail-anchored proteins factor 1 (170 aa).

Over methionine 1–asparagine 6 the chain is Lumenal. The helical transmembrane segment at tryptophan 7 to isoleucine 27 threads the bilayer. The Cytoplasmic portion of the chain corresponds to serine 28–methionine 96. Positions phenylalanine 35 to glutamine 93 are interaction with GET3/TRC40. Residues methionine 61–alanine 91 adopt a coiled-coil conformation. The helical transmembrane segment at lysine 97–leucine 117 threads the bilayer. Topologically, residues lysine 118–arginine 137 are lumenal. A helical membrane pass occupies residues leucine 138–cysteine 158. Topologically, residues asparagine 159–serine 170 are cytoplasmic.

This sequence belongs to the WRB/GET1 family. Component of the Golgi to ER traffic (GET) complex, which is composed of GET1/WRB, CAMLG/GET2 and GET3/TRC40. Within the complex, GET1 and CAMLG form a heterotetramer which is stabilized by phosphatidylinositol binding and which binds to the GET3 homodimer.

Its subcellular location is the endoplasmic reticulum membrane. In terms of biological role, required for the post-translational delivery of tail-anchored (TA) proteins to the endoplasmic reticulum (ER). Together with CAMLG/GET2, acts as a membrane receptor for soluble GET3/TRC40, which recognizes and selectively binds the transmembrane domain of TA proteins in the cytosol. Required to ensure correct topology and ER insertion of CAMLG. This Danio rerio (Zebrafish) protein is Guided entry of tail-anchored proteins factor 1.